We begin with the raw amino-acid sequence, 647 residues long: Threonine--tRNA ligase (647 aa).

The TGS domain occupies 1 to 61 (MINITFPDGA…TEDGSIEIVT (61 aa)). The segment at 242-540 (DHRKLGKELD…LIENYKGAFP (299 aa)) is catalytic. Residues cysteine 336, histidine 387, and histidine 517 each contribute to the Zn(2+) site.

It belongs to the class-II aminoacyl-tRNA synthetase family. As to quaternary structure, homodimer. Zn(2+) serves as cofactor.

The protein resides in the cytoplasm. It carries out the reaction tRNA(Thr) + L-threonine + ATP = L-threonyl-tRNA(Thr) + AMP + diphosphate + H(+). In terms of biological role, catalyzes the attachment of threonine to tRNA(Thr) in a two-step reaction: L-threonine is first activated by ATP to form Thr-AMP and then transferred to the acceptor end of tRNA(Thr). Also edits incorrectly charged L-seryl-tRNA(Thr). In Streptococcus pneumoniae serotype 4 (strain ATCC BAA-334 / TIGR4), this protein is Threonine--tRNA ligase.